The following is a 301-amino-acid chain: uncharacterized protein (301 aa).

A divalent metal cation contacts are provided by glutamate 146, glutamate 148, and aspartate 177.

The protein belongs to the FAH family.

This is an uncharacterized protein from Staphylococcus saprophyticus subsp. saprophyticus (strain ATCC 15305 / DSM 20229 / NCIMB 8711 / NCTC 7292 / S-41).